The chain runs to 115 residues: Large ribosomal subunit protein uL24 (115 aa).

The interval 49–68 is disordered; sequence NMKTKHHPPSKDQEKGSITK.

This sequence belongs to the universal ribosomal protein uL24 family. Part of the 50S ribosomal subunit.

One of two assembly initiator proteins, it binds directly to the 5'-end of the 23S rRNA, where it nucleates assembly of the 50S subunit. Its function is as follows. One of the proteins that surrounds the polypeptide exit tunnel on the outside of the subunit. The polypeptide is Large ribosomal subunit protein uL24 (Phytoplasma australiense).